A 79-amino-acid polypeptide reads, in one-letter code: UPF0291 protein SAV1341 (79 aa).

The interval 56-79 (IDPEGNDVTPEKIKEIQQKRDNKN) is disordered. Positions 64 to 79 (TPEKIKEIQQKRDNKN) are enriched in basic and acidic residues.

Belongs to the UPF0291 family.

Its subcellular location is the cytoplasm. This is UPF0291 protein SAV1341 from Staphylococcus aureus (strain Mu50 / ATCC 700699).